A 1364-amino-acid chain; its full sequence is MNKVFSLKYSFLAKGFIAVSELARRVSVKGKLKSASSIIISPITIAIVSYAPPSLAATVNADISYQTFRDFAENKGAFIVGASNINIYDKNGVLVGVLDKAPMPDFSSATMNTGTLPPGDHTLYSPQYVVTAKHVNGSDIMSFGHIQNNYTVVGENNHNSLDIKIRRLNKIVTEVAPAEISSVGAVNGAYQEGGRFKAFYRLGGGLQYIKDKNGNLTPVYTNGGFLTGGTISALSSYNNGQMITAPTGDIFNPANGPLANYLNKGDSGSPLFAYDSLDKKWVLVGVLSSGSEHGNNWVVTTQDFLHQQPKHDFDKTISYDSEKGSLQWRYNKNSGVGTLSQESVVWDMHGKKGGDLNAGKNLQFTGNNGEIILHDSIDQGAGYLQFFDNYTVTSLTDQTWTGGGIITEKGVNVLWQVNGVNDDNLHKVGEGTLTVNGKGVNNGGLKVGDGTVILNQRPDDNGHKQAFSSINISSGRATVILSDANQVNPDKISWGYRGGTLDLNGNNVNFTRLQAADYGAIVSNNNKNKSELTLKLQTLNENDISVDVKTYEVFGGHGSPGDLYYVPASNTYFILKSKAYGPFFSDLDNTNVWQNVGHDRDKAIQIVKQQKIGESSQPYMFHGQLNGYMDVNIHPLSGKDVLTLDGSVNLPEGVITKKSGTLIFQGHPVIHAGMTTSAGQSDWENRQFTMDKLRLDAATFHLSRNAHMQGDISAANGSTVILGSSRVFTDKNDGTGNAVSSVEGSSIATTAGDQSYYSGNVLLENHSSLEVRENFTGGIEAYDSSVSVTSQNAIFDHVGSFVNSSLLLEKGAKLTAQSGIFTNNTMKIKENASLTLTGIPSVGKPGYYSPVTSTTEGIHLGERASLSVKNMGYLSSNITAENSAAIINLGDSNATIGKTDSPLFSTLMRGYNAVLQGNIMGPQSSVNMNNALWHSDRNSELKELKANDSQIELGVRGHFAKLRVKELIASNSVFLVHANNSQADQLNVTDKLQGSNNTILVDFFNKAANGTNVTLITAPKGSDENTFKAGTQQIGFSNITPEIRTENTDTATQWVLTGYQSVADARASKIATDFMDSGYKSFLTEVNNLNKRMGDLRDSQGDAGGWARIMNGTGSGESGYRDNYTHVQIGADRKHELNGIDLFTGALLTYTDNNASSQAFSGKTKSLGGGVYASGLFESGAYFDLIGKYLHHDNRYTLNFASLGERSYTSHSLYAGAEIGYRYHMSENTWVEPQMELVYGSVSGKSFNWKDQGMQLSMKDKDYHPLIGRTGVDVGRAFSGDTWKVTVRAGLGYQFDLLANGETVLQDASGKKHFKGEKDSRMLMNVGTNVEVKDNMRFGLELEKSAFGRYNIDNSINANFRYYF.

The N-terminal stretch at 1–56 is a signal peptide; the sequence is MNKVFSLKYSFLAKGFIAVSELARRVSVKGKLKSASSIIISPITIAIVSYAPPSLA. One can recognise a Peptidase S6 domain in the interval 57–307; the sequence is ATVNADISYQ…VVTTQDFLHQ (251 aa). Catalysis depends on charge relay system residues His134, Asp162, and Ser267. The Autotransporter domain maps to 1098-1364; sequence DSQGDAGGWA…SINANFRYYF (267 aa).

Post-translationally, cleaved to release the mature protein from the outer membrane.

It localises to the periplasm. The protein resides in the secreted. It is found in the cell surface. The protein localises to the cell outer membrane. Its activity is regulated as follows. Inhibited by phenylmethylsulfonyl fluoride. Functionally, autotransporter serine protease probably involved in virulence. The polypeptide is Serine protease EatA (eatA) (Escherichia coli O78:H11 (strain H10407 / ETEC)).